The following is a 462-amino-acid chain: Keratin, type I cytoskeletal 28 (462 aa).

Residues 1-26 (MSLRFSGGSRHVGIQSGSLRPPSGGA) are disordered. Residues 1–83 (MSLRFSGGSR…GSEGGLLSGN (83 aa)) are head. The segment at 84 to 119 (EKVTMQNLNNRLASYLDNVKALEEANSELERKIKTW) is coil 1A. The IF rod domain maps to 84 to 399 (EKVTMQNLNN…RLIDGDENSC (316 aa)). The interval 120–141 (HEKYGPGSCRGLDRDYSKYHLT) is linker 1. A coil 1B region spans residues 142 to 233 (IEDLKSKIIS…KNHEEEMKVL (92 aa)). Residues 234–256 (QCAAGGNVNVEMNAAPGVDLTVL) form a linker 12 region. Residues 257-395 (LNNMRAEYEA…ETYCRLIDGD (139 aa)) are coil 2. The segment at 396–462 (ENSCSVSKGF…NGKAEQRVPF (67 aa)) is tail.

It belongs to the intermediate filament family. In terms of assembly, heterotetramer of two type I and two type II keratins. As to expression, in the hair follicle and bulb, uniformly expressed in all three layers of the inner root sheath (the Henle layer, the Huxley layer and the cuticle) and observed in matrix cells (at protein level).

It is found in the cytoplasm. Essential for the proper assembly of types I and II keratin protein complexes and the formation of keratin intermediate filaments in the inner root sheath (irs). In Mus musculus (Mouse), this protein is Keratin, type I cytoskeletal 28.